Reading from the N-terminus, the 207-residue chain is MCVTKASLPMLSPTGSPQEVEVGKILQGKRHGTISPESCAKLYCYYGVIMVLTVAVIALSVALSATKTEQIPVNKTYAACPQNWIGVENKCFYFSEYPSNWTFAQAFCMAQEAQLARFDNQDELNFLMRYKANFDSWIGLHRESSEHPWKWTDNTEYNNTIPIRGEERFAYLNNNGISSTRIYSLRMWICSKLNSYSLHCQTPFFPS.

At 1 to 41 (MCVTKASLPMLSPTGSPQEVEVGKILQGKRHGTISPESCAK) the chain is on the cytoplasmic side. Phosphoserine is present on residues serine 7 and serine 12. A helical; Signal-anchor for type II membrane protein transmembrane segment spans residues 42 to 62 (LYCYYGVIMVLTVAVIALSVA). Residues 63 to 207 (LSATKTEQIP…LHCQTPFFPS (145 aa)) are Extracellular-facing. An intrachain disulfide couples cysteine 80 to cysteine 91. In terms of domain architecture, C-type lectin spans 87–202 (VENKCFYFSE…LNSYSLHCQT (116 aa)). N-linked (GlcNAc...) asparagine glycosylation occurs at asparagine 100.

As to quaternary structure, homodimer; disulfide-linked. In terms of processing, N-glycosylated. Detected in fetal heart, brain, lung, chondrocytes, perichondrium and osteoblasts, and in adult splenocytes, thymocytes, lymph-node cells, osteoblasts, growth plate chondrocytes and skeletal muscle overlying the bone (at protein level). Ubiquitous. Detected in thymus, bone marrow, lung, gut, heart, skeletal muscle, ovary, spleen, ileum, liver and kidney.

Its subcellular location is the cell membrane. Functionally, receptor for KLRB1B that protects target cells against natural killer cell-mediated lysis. Inhibits osteoclast formation. Binds high molecular weight sulfated glycosaminoglycans. In Mus musculus (Mouse), this protein is C-type lectin domain family 2 member D (Clec2d).